Here is a 299-residue protein sequence, read N- to C-terminus: N-acetylmuramic acid 6-phosphate etherase (299 aa).

Residues 57 to 220 (ISAAFHKKGR…TTGAMIRTGK (164 aa)) form the SIS domain. Glu-85 acts as the Proton donor in catalysis. Residue Glu-116 is part of the active site.

The protein belongs to the GCKR-like family. MurNAc-6-P etherase subfamily. In terms of assembly, homodimer.

The enzyme catalyses N-acetyl-D-muramate 6-phosphate + H2O = N-acetyl-D-glucosamine 6-phosphate + (R)-lactate. Its pathway is amino-sugar metabolism; 1,6-anhydro-N-acetylmuramate degradation. The protein operates within amino-sugar metabolism; N-acetylmuramate degradation. It functions in the pathway cell wall biogenesis; peptidoglycan recycling. Its function is as follows. Specifically catalyzes the cleavage of the D-lactyl ether substituent of MurNAc 6-phosphate, producing GlcNAc 6-phosphate and D-lactate. Together with AnmK, is also required for the utilization of anhydro-N-acetylmuramic acid (anhMurNAc) either imported from the medium or derived from its own cell wall murein, and thus plays a role in cell wall recycling. The polypeptide is N-acetylmuramic acid 6-phosphate etherase (Psychromonas ingrahamii (strain DSM 17664 / CCUG 51855 / 37)).